A 64-amino-acid chain; its full sequence is Large ribosomal subunit protein eL24 (64 aa).

C6, C9, C32, and C36 together coordinate Zn(2+). Residues 6–36 form a C4-type zinc finger; the sequence is CNFCGKSIEPGTGKKFVKKDGSVMFICSSKC.

It belongs to the eukaryotic ribosomal protein eL24 family. Part of the 50S ribosomal subunit. Forms a cluster with proteins L3 and L14. Requires Zn(2+) as cofactor.

Binds to the 23S rRNA. The protein is Large ribosomal subunit protein eL24 of Methanococcus aeolicus (strain ATCC BAA-1280 / DSM 17508 / OCM 812 / Nankai-3).